We begin with the raw amino-acid sequence, 369 residues long: Ferredoxin--NADP reductase 2 (369 aa).

A disordered region spans residues 1-23; it reads MDLSIPNPVADTTKQVDGGSPAG. Residues D58, Q66, Y71, V111, F146, D311, and T352 each contribute to the FAD site.

The protein belongs to the ferredoxin--NADP reductase type 2 family. In terms of assembly, homodimer. Requires FAD as cofactor.

It catalyses the reaction 2 reduced [2Fe-2S]-[ferredoxin] + NADP(+) + H(+) = 2 oxidized [2Fe-2S]-[ferredoxin] + NADPH. The protein is Ferredoxin--NADP reductase 2 of Cupriavidus necator (strain ATCC 17699 / DSM 428 / KCTC 22496 / NCIMB 10442 / H16 / Stanier 337) (Ralstonia eutropha).